The primary structure comprises 972 residues: Fibroblast growth factor receptor (972 aa).

Positions 1–43 (MSLPRCPRTRTVMFSRTLTRCYPQRTLWIAILCVICSWTLSTA) are cleaved as a signal peptide. The Extracellular portion of the chain corresponds to 44–547 (GATTIRDKEV…NNMQPTSKTQ (504 aa)). One can recognise a Fibronectin type-III domain in the interval 57 to 152 (APQDLTAIPV…YIEASGTPPI (96 aa)). N109, N121, N191, N203, N239, N272, N315, N390, N398, N419, N422, and N460 each carry an N-linked (GlcNAc...) asparagine glycan. An Ig-like C2-type 1 domain is found at 150-242 (PPIPPTLRRN…GQPIHVNFTL (93 aa)). Residues C176 and C226 are joined by a disulfide bond. Ig-like C2-type domains are found at residues 282 to 374 (PRFT…YDVK) and 383 to 517 (PIMS…AYLD). C306 and C358 are oxidised to a cystine. A disulfide bond links C403 and C501. A helical membrane pass occupies residues 548-568 (LIIFSVVGFVVVLILVTCIAI). The Cytoplasmic portion of the chain corresponds to 569–972 (LCKQTQVRHR…QTRDCCPYAN (404 aa)). A Protein kinase domain is found at 639 to 925 (LTVGKTIGEG…ISVSSNQDYL (287 aa)). Residues 645 to 653 (IGEGAFGKV) and K673 each bind ATP. D781 acts as the Proton acceptor in catalysis. Residue Y812 is modified to Phosphotyrosine; by autocatalysis.

The protein belongs to the protein kinase superfamily. Tyr protein kinase family. Fibroblast growth factor receptor subfamily.

It is found in the membrane. It catalyses the reaction L-tyrosyl-[protein] + ATP = O-phospho-L-tyrosyl-[protein] + ADP + H(+). Functionally, receptor for basic fibroblast growth factor. The protein is Fibroblast growth factor receptor (FGFR) of Strongylocentrotus purpuratus (Purple sea urchin).